The following is a 187-amino-acid chain: Large ribosomal subunit protein bL25 (187 aa).

Belongs to the bacterial ribosomal protein bL25 family. CTC subfamily. Part of the 50S ribosomal subunit; part of the 5S rRNA/L5/L18/L25 subcomplex. Contacts the 5S rRNA. Binds to the 5S rRNA independently of L5 and L18.

This is one of the proteins that binds to the 5S RNA in the ribosome where it forms part of the central protuberance. The protein is Large ribosomal subunit protein bL25 of Tropheryma whipplei (strain TW08/27) (Whipple's bacillus).